The sequence spans 301 residues: Probable aspartoacylase (301 aa).

The Zn(2+) site is built by His-13 and Glu-16. Substrate-binding positions include Arg-54 and 61–62; that span reads NR. Residue His-105 participates in Zn(2+) binding. Glu-163 and Tyr-273 together coordinate substrate.

This sequence belongs to the AspA/AstE family. Aspartoacylase subfamily. Requires Zn(2+) as cofactor.

It carries out the reaction an N-acyl-L-aspartate + H2O = a carboxylate + L-aspartate. This is Probable aspartoacylase from Prochlorococcus marinus (strain MIT 9215).